A 338-amino-acid chain; its full sequence is N-acetyl-gamma-glutamyl-phosphate reductase (338 aa).

The active site involves Cys148.

This sequence belongs to the NAGSA dehydrogenase family. Type 1 subfamily.

It is found in the cytoplasm. It carries out the reaction N-acetyl-L-glutamate 5-semialdehyde + phosphate + NADP(+) = N-acetyl-L-glutamyl 5-phosphate + NADPH + H(+). The protein operates within amino-acid biosynthesis; L-arginine biosynthesis; N(2)-acetyl-L-ornithine from L-glutamate: step 3/4. Its function is as follows. Catalyzes the NADPH-dependent reduction of N-acetyl-5-glutamyl phosphate to yield N-acetyl-L-glutamate 5-semialdehyde. This chain is N-acetyl-gamma-glutamyl-phosphate reductase, found in Leptospira interrogans serogroup Icterohaemorrhagiae serovar copenhageni (strain Fiocruz L1-130).